Reading from the N-terminus, the 234-residue chain is NAD-reducing hydrogenase HoxS subunit gamma (234 aa).

In terms of domain architecture, 2Fe-2S ferredoxin-type spans 2-77 (SIQITIDGKT…GLNVEVNDPE (76 aa)). C35, C46, C49, and C61 together coordinate [2Fe-2S] cluster. A 4Fe-4S His(Cys)3-ligated-type domain is found at 77–116 (ELVDMRKALVEFLFAEGNHNCPSCEKSGRCQLQAVGYEVD). H95, C97, C100, C106, C145, C148, C151, and C198 together coordinate [4Fe-4S] cluster.

Belongs to the complex I 75 kDa subunit family. In terms of assembly, tetramer of an alpha and a gamma subunits (flavin-containing dimer), and a delta and a nickel-containing beta subunits (hydrogenase dimer). It depends on [2Fe-2S] cluster as a cofactor. [4Fe-4S] cluster serves as cofactor.

The protein localises to the cytoplasm. The catalysed reaction is H2 + NAD(+) = NADH + H(+). Functionally, subunits alpha and gamma of HoxS constitute an NADH--oxidoreductase. This is NAD-reducing hydrogenase HoxS subunit gamma (hoxU) from Cupriavidus necator (strain ATCC 17699 / DSM 428 / KCTC 22496 / NCIMB 10442 / H16 / Stanier 337) (Ralstonia eutropha).